The primary structure comprises 59 residues: Preprotein translocase subunit SecG (59 aa).

Over 1–33 the chain is Cytoplasmic; it reads MARRESSGGSGGLMSSAGLMRYFEAEESAIKID. Residues 34 to 55 form a helical membrane-spanning segment; that stretch reads PKTVIIAAVASGAFIWILNFTY. Topologically, residues 56 to 59 are extracellular; the sequence is GRFW.

It belongs to the SEC61-beta family. In terms of assembly, component of the protein translocase complex. Heterotrimer consisting of alpha (SecY), beta (SecG) and gamma (SecE) subunits. Can form oligomers of the heterotrimer.

It is found in the cell membrane. Functionally, involved in protein export. The function of the beta subunit is unknown, but it may be involved in stabilization of the trimeric complex. The chain is Preprotein translocase subunit SecG from Methanocella arvoryzae (strain DSM 22066 / NBRC 105507 / MRE50).